The sequence spans 151 residues: Protein Turandot Z (151 aa).

Positions 1-23 (MSRLIHLSFVLALLACLTGTISA) are cleaved as a signal peptide.

It belongs to the Turandot family.

The protein resides in the secreted. In terms of biological role, a humoral factor that may play a role in stress tolerance. The sequence is that of Protein Turandot Z from Drosophila persimilis (Fruit fly).